The primary structure comprises 57 residues: DNA-directed RNA polymerase subunit Rpo6 (57 aa).

It belongs to the archaeal Rpo6/eukaryotic RPB6 RNA polymerase subunit family. As to quaternary structure, part of the RNA polymerase complex.

It localises to the cytoplasm. It catalyses the reaction RNA(n) + a ribonucleoside 5'-triphosphate = RNA(n+1) + diphosphate. Functionally, DNA-dependent RNA polymerase (RNAP) catalyzes the transcription of DNA into RNA using the four ribonucleoside triphosphates as substrates. The protein is DNA-directed RNA polymerase subunit Rpo6 of Thermococcus onnurineus (strain NA1).